Reading from the N-terminus, the 199-residue chain is Dephospho-CoA kinase (199 aa).

A DPCK domain is found at 3–199; the sequence is ILGLTGSIGM…EVVKMPQRRA (197 aa). 11-16 serves as a coordination point for ATP; that stretch reads GMGKST.

It belongs to the CoaE family.

Its subcellular location is the cytoplasm. It catalyses the reaction 3'-dephospho-CoA + ATP = ADP + CoA + H(+). Its pathway is cofactor biosynthesis; coenzyme A biosynthesis; CoA from (R)-pantothenate: step 5/5. Catalyzes the phosphorylation of the 3'-hydroxyl group of dephosphocoenzyme A to form coenzyme A. The protein is Dephospho-CoA kinase of Bradyrhizobium diazoefficiens (strain JCM 10833 / BCRC 13528 / IAM 13628 / NBRC 14792 / USDA 110).